A 428-amino-acid polypeptide reads, in one-letter code: MSVIVDIRGREVLDSRGNPTVEAEVVLESGVVATALVPSGASTGETEAVELRDGDKNRFKGKGVLKAVDNINTKIADLLIGENALDQVRIDRLMLELDGTENKSNLGANAILAVSLAVARAAAMELDIPLYRYLGGTNAKVLPVPLMNVINGGAHADNNLDFQEFMIVPVFGGRFKEALRCGVEIFHTLKTVLKDKGYSTNVGDEGGFAPALNSTKEALDILMDAIKKAGYEPGEDVLLAIDAASTEFYDKERKVYRFEGEELTADDMIVLYEEIEGTYPIISIEDGLAEDDIEGWKKLTKALGDKIQLVGDDLFTTNPKLIKKGIEEGIANSVLVKLNQIGSLTETLDAIELAKVASYTNVISHRSGETEDTFIADLAVATNAGQIKTGSASRTDRIAKYNQLLRIEEELGEDAVFKGKEAYSKFIR.

Gln163 contacts (2R)-2-phosphoglycerate. The Proton donor role is filled by Glu205. Asp242, Glu285, and Asp312 together coordinate Mg(2+). (2R)-2-phosphoglycerate-binding residues include Lys337, Arg366, Ser367, and Lys388. Catalysis depends on Lys337, which acts as the Proton acceptor.

It belongs to the enolase family. Mg(2+) is required as a cofactor.

The protein localises to the cytoplasm. It is found in the secreted. The protein resides in the cell surface. The enzyme catalyses (2R)-2-phosphoglycerate = phosphoenolpyruvate + H2O. Its pathway is carbohydrate degradation; glycolysis; pyruvate from D-glyceraldehyde 3-phosphate: step 4/5. Catalyzes the reversible conversion of 2-phosphoglycerate (2-PG) into phosphoenolpyruvate (PEP). It is essential for the degradation of carbohydrates via glycolysis. The sequence is that of Enolase from Persephonella marina (strain DSM 14350 / EX-H1).